The primary structure comprises 633 residues: Leucine-rich repeat and IQ domain-containing protein 3 (633 aa).

LRR repeat units follow at residues 51 to 72, 73 to 94, and 98 to 119; these read SLRV…QSCK, KLIK…NFWS, and NLKL…CVLS. The 48-residue stretch at 132 to 179 folds into the LRRCT domain; the sequence is CPVSLKKGYRHVLVNSIWPLKALDHHVISDEEIIQNWRLPERFKTFSP. The 30-residue stretch at 215 to 244 folds into the IQ domain; sequence HNSPVLIIQRWIRGFIVRKHLSPYFKHKKH. A disordered region spans residues 324–343; the sequence is SKQPRHHIHKGQKAMKAESE. Residues 325–336 show a composition bias toward basic residues; that stretch reads KQPRHHIHKGQK. Residues 556–617 adopt a coiled-coil conformation; sequence IEKWEEQKYK…AKVEYIKTFY (62 aa).

This is Leucine-rich repeat and IQ domain-containing protein 3 (Lrriq3) from Mus musculus (Mouse).